The sequence spans 238 residues: ATP synthase subunit a (238 aa).

5 consecutive transmembrane segments (helical) span residues 18–38 (LTIL…VFWA), 75–95 (YSLL…LGLM), 112–132 (NFGV…IEGI), 179–199 (VVTG…PLAF), and 203–223 (IVWT…FIIL).

It belongs to the ATPase A chain family. In terms of assembly, F-type ATPases have 2 components, CF(1) - the catalytic core - and CF(0) - the membrane proton channel. CF(1) has five subunits: alpha(3), beta(3), gamma(1), delta(1), epsilon(1). CF(0) has three main subunits: a(1), b(2) and c(9-12). The alpha and beta chains form an alternating ring which encloses part of the gamma chain. CF(1) is attached to CF(0) by a central stalk formed by the gamma and epsilon chains, while a peripheral stalk is formed by the delta and b chains.

It is found in the cell membrane. In terms of biological role, key component of the proton channel; it plays a direct role in the translocation of protons across the membrane. In Streptococcus agalactiae serotype Ia (strain ATCC 27591 / A909 / CDC SS700), this protein is ATP synthase subunit a.